Here is a 104-residue protein sequence, read N- to C-terminus: Small ribosomal subunit protein uS10 (104 aa).

The protein belongs to the universal ribosomal protein uS10 family. As to quaternary structure, part of the 30S ribosomal subunit.

Its function is as follows. Involved in the binding of tRNA to the ribosomes. This chain is Small ribosomal subunit protein uS10, found in Aquifex aeolicus (strain VF5).